Here is a 245-residue protein sequence, read N- to C-terminus: Polyhedrin (245 aa).

Belongs to the polyhedrin family.

Functionally, major component of the virus occlusion bodies, which are large proteinaceous structures (polyhedra), that protect the virus from the outside environment for extended periods until they are ingested by insect larvae. This is Polyhedrin (PH) from Bombyx mori nuclear polyhedrosis virus (BmNPV).